Reading from the N-terminus, the 975-residue chain is Kinesin-like protein KIN-14K (975 aa).

The interval 1-40 is disordered; sequence MKNRIKKGSSMIGVYGRSDGSSSIQSSNGSESRESIDDNK. A compositionally biased stretch (low complexity) spans 17–30; it reads RSDGSSSIQSSNGS. The segment covering 31 to 40 has biased composition (basic and acidic residues); that stretch reads ESRESIDDNK. The Calponin-homology (CH) domain maps to 40–143; it reads KQGHQSLVEW…SLKALKASFS (104 aa). Residues 289–345 adopt a coiled-coil conformation; sequence KERSNAELSKLKQELEIVKETHEKQFLELKLNAQKAKVELERQVKNSELRVVEAKEL. Positions 436–746 constitute a Kinesin motor domain; that stretch reads NIRVYCRIRP…LKFAERVSGV (311 aa). 520-527 contacts ATP; that stretch reads GQTGSGKT. Residues 757 to 788 are a coiled coil; that stretch reads GRDVRQLMEQVSNLKDMIAKKDEELQKFQNIN. Disordered stretches follow at residues 801–852 and 900–975; these read VSPP…GAKD and LFPE…NRKR. Positions 944-958 are enriched in low complexity; it reads LSISTTSSKALTSSK.

Belongs to the TRAFAC class myosin-kinesin ATPase superfamily. Kinesin family. KIN-14 subfamily.

In Arabidopsis thaliana (Mouse-ear cress), this protein is Kinesin-like protein KIN-14K.